We begin with the raw amino-acid sequence, 234 residues long: Probable pectate lyase F (234 aa).

The signal sequence occupies residues 1–17 (MRSTAAVLSILLPGALA). N168 carries an N-linked (GlcNAc...) asparagine glycan.

Belongs to the polysaccharide lyase 3 family. It depends on Ca(2+) as a cofactor.

It localises to the secreted. It catalyses the reaction Eliminative cleavage of (1-&gt;4)-alpha-D-galacturonan to give oligosaccharides with 4-deoxy-alpha-D-galact-4-enuronosyl groups at their non-reducing ends.. In terms of biological role, pectinolytic enzyme consist of four classes of enzymes: pectin lyase, polygalacturonase, pectin methylesterase and rhamnogalacturonase. Among pectinolytic enzymes, pectin lyase is the most important in depolymerization of pectin, since it cleaves internal glycosidic bonds of highly methylated pectins. Favors pectate, the anion, over pectin, the methyl ester. The polypeptide is Probable pectate lyase F (plyF) (Aspergillus terreus (strain NIH 2624 / FGSC A1156)).